The primary structure comprises 156 residues: Myosin regulatory light chain, striated adductor muscle (156 aa).

At Ala-1 the chain carries Blocked amino end (Ala). EF-hand domains lie at 15 to 50 (KQIQEMKEAFSMIDVDRDGFVNKDDLKAISEQLGRT) and 84 to 119 (DTEETLRNAFAMFDELDTKKLNIEYIKDLLENMGDN). Ca(2+) is bound by residues Asp-28, Asp-30, Asp-32, and Asp-39.

Functionally, in molluscan muscle, calcium regulation is associated with myosin rather than with actin. Muscle myosin contains two types of light chains: the catalytic light chain, essential for ATPase activity, and the regulatory light chain, a calcium-binding protein responsible for Ca(2+) dependent binding and Ca(2+) dependent Mg-ATPase activity. The sequence is that of Myosin regulatory light chain, striated adductor muscle from Mizuhopecten yessoensis (Japanese scallop).